Here is a 399-residue protein sequence, read N- to C-terminus: MSIISTRLNSIKPSPTLAVVKKTLELKKAGVNIIALGAGEPDFDTPDNIKEVAITSIKDGFTKYTNVDGIPLLKQAIKNKFKRENNIDYELDEIIVSTGGKQVIYNLFMASLDKGDEVIIPVPYWVSYPDMVALSTGTPVFVNCGIENNFKLSVEALEHSITDKTKWLIINSPSNPTGAGYNCKELENIAKTLRKYPNVNIMSDDIYEHITFDDFKFYTLAQIAPDLKERIFTVNGVSKAYSMTGWRIGYGAGSKALIKAMTIIQSQSTSNPCSISQMAAIEALNGTQDYIKSNALNFQKKRDLALSILEEVTYFECYKPEGAFYLFVKCDKIFGTKTKSGRIIANSNNFSEYLLEEAKVAVVPGIAFGLDGYFRISYATSMQELEEACIRIKHACNAL.

Gly-39, Trp-125, and Asn-175 together coordinate L-aspartate. Residue Lys-239 is modified to N6-(pyridoxal phosphate)lysine. Arg-375 lines the L-aspartate pocket.

This sequence belongs to the class-I pyridoxal-phosphate-dependent aminotransferase family. In terms of assembly, homodimer. It depends on pyridoxal 5'-phosphate as a cofactor.

It is found in the cytoplasm. It catalyses the reaction L-aspartate + 2-oxoglutarate = oxaloacetate + L-glutamate. The catalysed reaction is L-arogenate + 2-oxoglutarate = prephenate + L-glutamate. Its function is as follows. Catalyzes the reversible conversion of aspartate and 2-oxoglutarate to glutamate and oxaloacetate. Can also transaminate prephenate in the presence of glutamate. In Rickettsia prowazekii (strain Madrid E), this protein is Probable aspartate/prephenate aminotransferase (aatA).